The primary structure comprises 146 residues: Hemoglobin subunit beta (146 aa).

N-acetylvaline is present on Val-1. The region spanning 2-146 (HLTADEKSAV…VATALGHKYH (145 aa)) is the Globin domain. At Thr-12 the chain carries Phosphothreonine. Position 44 is a phosphoserine (Ser-44). At Lys-59 the chain carries N6-acetyllysine. His-63 provides a ligand contact to heme b. Lys-82 carries the post-translational modification N6-acetyllysine. Heme b is bound at residue His-92. Cys-93 carries the post-translational modification S-nitrosocysteine. The residue at position 144 (Lys-144) is an N6-acetyllysine.

Belongs to the globin family. As to quaternary structure, heterotetramer of two alpha chains and two beta chains. As to expression, red blood cells.

In terms of biological role, involved in oxygen transport from the lung to the various peripheral tissues. The chain is Hemoglobin subunit beta (HBB) from Antrozous pallidus (Pallid bat).